The chain runs to 176 residues: Ferritin, middle subunit (176 aa).

The 150-residue stretch at 7 to 156 (QNYHSDCEAA…DFITNLKRLG (150 aa)) folds into the Ferritin-like diiron domain. E24, E59, H62, E104, Q138, and D141 together coordinate Fe cation.

It belongs to the ferritin family. As to quaternary structure, oligomer of 24 subunits. The functional molecule is roughly spherical and contains a central cavity into which the polymeric mineral iron core is deposited.

The catalysed reaction is 4 Fe(2+) + O2 + 4 H(+) = 4 Fe(3+) + 2 H2O. Functionally, stores iron in a soluble, non-toxic, readily available form. Important for iron homeostasis. Has ferroxidase activity. Iron is taken up in the ferrous form and deposited as ferric hydroxides after oxidation. This is Ferritin, middle subunit from Aquarana catesbeiana (American bullfrog).